Consider the following 99-residue polypeptide: UPF0213 protein RBAM_000440 (99 aa).

Residues 4 to 79 (NSHFFYVLLC…KQLTRKKKEQ (76 aa)) enclose the GIY-YIG domain.

It belongs to the UPF0213 family.

In Bacillus velezensis (strain DSM 23117 / BGSC 10A6 / LMG 26770 / FZB42) (Bacillus amyloliquefaciens subsp. plantarum), this protein is UPF0213 protein RBAM_000440.